The primary structure comprises 354 residues: NADH-ubiquinone oxidoreductase chain 1 (354 aa).

The next 8 membrane-spanning stretches (helical) occupy residues 43-63 (LFWS…LTLF), 108-128 (PALF…LWGC), 139-159 (FFWG…GVVL), 180-200 (VISY…VVGS), 211-231 (VSGC…FCVL), 264-284 (IFIA…VLFL), 298-318 (LISS…LIVL), and 334-354 (LIWC…LMII).

This sequence belongs to the complex I subunit 1 family.

It localises to the mitochondrion inner membrane. The catalysed reaction is a ubiquinone + NADH + 5 H(+)(in) = a ubiquinol + NAD(+) + 4 H(+)(out). Core subunit of the mitochondrial membrane respiratory chain NADH dehydrogenase (Complex I) that is believed to belong to the minimal assembly required for catalysis. Complex I functions in the transfer of electrons from NADH to the respiratory chain. The immediate electron acceptor for the enzyme is believed to be ubiquinone. The protein is NADH-ubiquinone oxidoreductase chain 1 (ND1) of Pecten maximus (King scallop).